The following is a 1178-amino-acid chain: DNA-directed RNA polymerase subunit beta (1178 aa).

A disordered region spans residues methionine 1–asparagine 37. The span at serine 18 to proline 33 shows a compositional bias: low complexity.

Belongs to the RNA polymerase beta chain family. In terms of assembly, the RNAP catalytic core consists of 2 alpha, 1 beta, 1 beta' and 1 omega subunit. When a sigma factor is associated with the core the holoenzyme is formed, which can initiate transcription.

The catalysed reaction is RNA(n) + a ribonucleoside 5'-triphosphate = RNA(n+1) + diphosphate. In terms of biological role, DNA-dependent RNA polymerase catalyzes the transcription of DNA into RNA using the four ribonucleoside triphosphates as substrates. In Mycobacterium tuberculosis (strain CDC 1551 / Oshkosh), this protein is DNA-directed RNA polymerase subunit beta.